A 270-amino-acid polypeptide reads, in one-letter code: MAMGTRYAGKVVIVTGGGRGIGAGIVRAFVESGAQVVICDKDEARGRAVERELPGTVFLLCDVTREEDVRTLVSETIRRFGRLDCIVNNAGYHPPPQWPEETSAQGFRQLLELNLLGTYTLTKLALPHLRKSRGNVINISSLVGAIGQSQAVPYVATKGAVTAMTKALALDESQYGVRVNCISPGNIWTPLWEELAASTPDPTATIREGTLAQPLGRMGQPAEVAAAAVFLASEATFCTGTELLVTGGAELGYGRKAGQAAPAEAPTTPS.

12 residues coordinate NAD(+): R19, I21, D40, K41, D62, V63, N89, Y154, K158, I187, T189, and L191. Y154 (proton acceptor) is an active-site residue.

It belongs to the short-chain dehydrogenases/reductases (SDR) family. In terms of assembly, homotetramer. Detected in retina.

It localises to the cytoplasm. The enzyme catalyses L-fucose + NAD(+) = L-fucono-1,5-lactone + NADH + H(+). The catalysed reaction is D-arabinose + NAD(+) = D-arabinono-1,5-lactone + NADH + H(+). It catalyses the reaction L-galactose + NAD(+) = L-galactono-1,5-lactone + NADH + H(+). It functions in the pathway carbohydrate degradation; L-fucose degradation. In terms of biological role, catalyzes the NAD(+)-dependent oxidation of L-fucose, yielding L-fucono-1,5-lactone, which rapidly converts spontaneously to L-fucone-1,4-lactone. Can also act on D-arabinose and L-galactose, with lower catalytic efficiency. Does not use NADPH. May be the initial enzyme of the putative L-fucose degradation pathway in mammals. This is L-fucose dehydrogenase (HSD17B14) from Bos taurus (Bovine).